Here is a 507-residue protein sequence, read N- to C-terminus: Sterol 14-alpha demethylase CYP51A (507 aa).

Residues tyrosine 7–proline 29 form a helical membrane-spanning segment. Residue tyrosine 105 participates in lanosterol binding. Residue cysteine 449 coordinates heme.

The protein belongs to the cytochrome P450 family. Heme is required as a cofactor.

It is found in the endoplasmic reticulum membrane. It carries out the reaction a 14alpha-methyl steroid + 3 reduced [NADPH--hemoprotein reductase] + 3 O2 = a Delta(14) steroid + formate + 3 oxidized [NADPH--hemoprotein reductase] + 4 H2O + 4 H(+). The enzyme catalyses a 14alpha-methyl steroid + reduced [NADPH--hemoprotein reductase] + O2 = a 14alpha-hydroxymethyl steroid + oxidized [NADPH--hemoprotein reductase] + H2O + H(+). The catalysed reaction is a 14alpha-hydroxymethyl steroid + reduced [NADPH--hemoprotein reductase] + O2 = a 14alpha-formyl steroid + oxidized [NADPH--hemoprotein reductase] + 2 H2O + H(+). It catalyses the reaction a 14alpha-formyl steroid + reduced [NADPH--hemoprotein reductase] + O2 = a Delta(14) steroid + formate + oxidized [NADPH--hemoprotein reductase] + H2O + 2 H(+). It carries out the reaction lanosterol + 3 reduced [NADPH--hemoprotein reductase] + 3 O2 = 4,4-dimethyl-5alpha-cholesta-8,14,24-trien-3beta-ol + formate + 3 oxidized [NADPH--hemoprotein reductase] + 4 H2O + 4 H(+). The enzyme catalyses lanosterol + reduced [NADPH--hemoprotein reductase] + O2 = 32-hydroxylanosterol + oxidized [NADPH--hemoprotein reductase] + H2O + H(+). The catalysed reaction is 32-hydroxylanosterol + reduced [NADPH--hemoprotein reductase] + O2 = 32-oxolanosterol + oxidized [NADPH--hemoprotein reductase] + 2 H2O + H(+). It catalyses the reaction 32-oxolanosterol + reduced [NADPH--hemoprotein reductase] + O2 = 4,4-dimethyl-5alpha-cholesta-8,14,24-trien-3beta-ol + formate + oxidized [NADPH--hemoprotein reductase] + H2O + 2 H(+). It carries out the reaction eburicol + 3 reduced [NADPH--hemoprotein reductase] + 3 O2 = 14-demethyleburicol + formate + 3 oxidized [NADPH--hemoprotein reductase] + 4 H2O + 4 H(+). The enzyme catalyses eburicol + reduced [NADPH--hemoprotein reductase] + O2 = 32-hydroxyeburicol + oxidized [NADPH--hemoprotein reductase] + H2O + H(+). The catalysed reaction is 32-hydroxyeburicol + reduced [NADPH--hemoprotein reductase] + O2 = 32-oxoeburicol + oxidized [NADPH--hemoprotein reductase] + 2 H2O + H(+). It catalyses the reaction 32-oxoeburicol + reduced [NADPH--hemoprotein reductase] + O2 = 14-demethyleburicol + formate + oxidized [NADPH--hemoprotein reductase] + H2O + 2 H(+). Its pathway is steroid metabolism; ergosterol biosynthesis. Together with cyp51B and cyp51C, encodes the sterol 14alpha-demethylase that plays a critical role in the third module of ergosterol biosynthesis pathway, being ergosterol the major sterol component in fungal membranes that participates in a variety of functions. CYP51A encodes the sterol 14-alpha-demethylase induced on ergosterol depletion and is responsible for the intrinsic variation in azole sensitivity. The third module or late pathway involves the ergosterol synthesis itself through consecutive reactions that mainly occur in the endoplasmic reticulum (ER) membrane. In filamentous fungi, during the initial step of this module, lanosterol (lanosta-8,24-dien-3beta-ol) can be metabolized to eburicol. Sterol 14alpha-demethylase catalyzes the three-step oxidative removal of the 14alpha-methyl group (C-32) of both these sterols in the form of formate, and converts eburicol and lanosterol to 14-demethyleburicol (4,4,24-trimethylergosta-8,14,24(28)-trienol) and 4,4-dimethyl-5alpha-cholesta-8,14,24-trien-3beta-ol, respectively, which are further metabolized by other enzymes in the pathway to ergosterol. Can also use substrates not intrinsic to fungi, such as 24,25-dihydrolanosterol (DHL), producing 4,4'-dimethyl-8,14-cholestadien-3-beta-ol, but at lower rates than the endogenous substrates. The chain is Sterol 14-alpha demethylase CYP51A from Gibberella zeae (strain ATCC MYA-4620 / CBS 123657 / FGSC 9075 / NRRL 31084 / PH-1) (Wheat head blight fungus).